Reading from the N-terminus, the 427-residue chain is tRNA(Ile)-lysidine synthase (427 aa).

ATP is bound at residue 27–32 (SGGVDS).

Belongs to the tRNA(Ile)-lysidine synthase family.

The protein localises to the cytoplasm. The catalysed reaction is cytidine(34) in tRNA(Ile2) + L-lysine + ATP = lysidine(34) in tRNA(Ile2) + AMP + diphosphate + H(+). Functionally, ligates lysine onto the cytidine present at position 34 of the AUA codon-specific tRNA(Ile) that contains the anticodon CAU, in an ATP-dependent manner. Cytidine is converted to lysidine, thus changing the amino acid specificity of the tRNA from methionine to isoleucine. The sequence is that of tRNA(Ile)-lysidine synthase from Streptococcus equi subsp. equi (strain 4047).